Reading from the N-terminus, the 349-residue chain is GMP reductase (349 aa).

108 to 131 (IDFLKIKKIFLLSSELKYICIDVA) provides a ligand contact to NADP(+). 2 residues coordinate K(+): Gly181 and Gly183. The Thioimidate intermediate role is filled by Cys186. 216-239 (IISDGGCTVSGDIAKAFGGGADFV) lines the NADP(+) pocket.

Belongs to the IMPDH/GMPR family. GuaC type 1 subfamily. Homotetramer.

It carries out the reaction IMP + NH4(+) + NADP(+) = GMP + NADPH + 2 H(+). Its function is as follows. Catalyzes the irreversible NADPH-dependent deamination of GMP to IMP. It functions in the conversion of nucleobase, nucleoside and nucleotide derivatives of G to A nucleotides, and in maintaining the intracellular balance of A and G nucleotides. The sequence is that of GMP reductase from Buchnera aphidicola subsp. Acyrthosiphon pisum (strain 5A).